The sequence spans 1035 residues: Protein SEY1 homolog (1035 aa).

In terms of domain architecture, GB1/RHD3-type G spans 32–267 (DGTFICVSVF…TTLIPLTDSS (236 aa)). 42-49 (GPQSSGKS) contributes to the GTP binding site.

This sequence belongs to the TRAFAC class dynamin-like GTPase superfamily. GB1/RHD3 GTPase family. RHD3 subfamily.

Its subcellular location is the endoplasmic reticulum membrane. Functionally, probable GTP-binding protein that may be involved in cell development. This is Protein SEY1 homolog from Giardia intestinalis (strain ATCC 50803 / WB clone C6) (Giardia lamblia).